Consider the following 171-residue polypeptide: CDP-archaeol synthase (171 aa).

The next 5 helical transmembrane spans lie at 7–27 (MFWA…PVLL), 55–75 (FLGG…LTPA), 84–104 (VLLA…GSFI), 115–135 (PAVG…AYPV), and 141–161 (GQML…NYFA).

Belongs to the CDP-archaeol synthase family. Requires Mg(2+) as cofactor.

The protein localises to the cell membrane. It carries out the reaction 2,3-bis-O-(geranylgeranyl)-sn-glycerol 1-phosphate + CTP + H(+) = CDP-2,3-bis-O-(geranylgeranyl)-sn-glycerol + diphosphate. Its pathway is membrane lipid metabolism; glycerophospholipid metabolism. Its function is as follows. Catalyzes the formation of CDP-2,3-bis-(O-geranylgeranyl)-sn-glycerol (CDP-archaeol) from 2,3-bis-(O-geranylgeranyl)-sn-glycerol 1-phosphate (DGGGP) and CTP. This reaction is the third ether-bond-formation step in the biosynthesis of archaeal membrane lipids. The protein is CDP-archaeol synthase of Thermococcus gammatolerans (strain DSM 15229 / JCM 11827 / EJ3).